The following is a 364-amino-acid chain: tRNA/tmRNA (uracil-C(5))-methyltransferase (364 aa).

Residues Gln-189, Tyr-216, Asn-221, Glu-237, and Asp-297 each contribute to the S-adenosyl-L-methionine site. Cys-322 functions as the Nucleophile in the catalytic mechanism. Catalysis depends on Glu-356, which acts as the Proton acceptor.

Belongs to the class I-like SAM-binding methyltransferase superfamily. RNA M5U methyltransferase family. TrmA subfamily.

The catalysed reaction is uridine(54) in tRNA + S-adenosyl-L-methionine = 5-methyluridine(54) in tRNA + S-adenosyl-L-homocysteine + H(+). It catalyses the reaction uridine(341) in tmRNA + S-adenosyl-L-methionine = 5-methyluridine(341) in tmRNA + S-adenosyl-L-homocysteine + H(+). Dual-specificity methyltransferase that catalyzes the formation of 5-methyluridine at position 54 (m5U54) in all tRNAs, and that of position 341 (m5U341) in tmRNA (transfer-mRNA). The polypeptide is tRNA/tmRNA (uracil-C(5))-methyltransferase (Campylobacter curvus (strain 525.92)).